The sequence spans 415 residues: Gamma-glutamyl phosphate reductase (415 aa).

The protein belongs to the gamma-glutamyl phosphate reductase family.

The protein localises to the cytoplasm. The catalysed reaction is L-glutamate 5-semialdehyde + phosphate + NADP(+) = L-glutamyl 5-phosphate + NADPH + H(+). Its pathway is amino-acid biosynthesis; L-proline biosynthesis; L-glutamate 5-semialdehyde from L-glutamate: step 2/2. In terms of biological role, catalyzes the NADPH-dependent reduction of L-glutamate 5-phosphate into L-glutamate 5-semialdehyde and phosphate. The product spontaneously undergoes cyclization to form 1-pyrroline-5-carboxylate. This is Gamma-glutamyl phosphate reductase from Listeria monocytogenes serotype 4b (strain F2365).